Reading from the N-terminus, the 600-residue chain is Proline dehydrogenase 1, mitochondrial (600 aa).

The tract at residues 155 to 177 is disordered; it reads AEHKEMESCTSAAERDGSGTNKR. Residues Lys-368 and Lys-486 each carry the N6-acetyllysine modification.

The protein belongs to the proline oxidase family. FAD serves as cofactor. In terms of tissue distribution, expressed in lung, skeletal muscle and brain, to a lesser extent in heart and kidney, and weakly in liver, placenta and pancreas.

Its subcellular location is the mitochondrion matrix. The catalysed reaction is L-proline + a quinone = (S)-1-pyrroline-5-carboxylate + a quinol + H(+). The protein operates within amino-acid degradation; L-proline degradation into L-glutamate; L-glutamate from L-proline: step 1/2. Functionally, converts proline to delta-1-pyrroline-5-carboxylate. This Homo sapiens (Human) protein is Proline dehydrogenase 1, mitochondrial.